The primary structure comprises 421 residues: MDNIPQSINPIPAFYCCYLLRSTVRHASLYIGSTPEPSRRLAQHNGDRTGGARKTSSEKLRPWEMVAIVSGFTNRAGALQFEWAWQHTKESRHAEVERCESEQLGTRGSSRTGKEVKRAGKPRTSLPNILENLHILLRSPYFSEWPLEVWFFSADVWQVWSQPKGNLLDNSIKVVTAFSSKEAGDTNRREILGKRIETLDTGYDALIEYVEKSQFLLESEEAIDCGVCKQRLNPRNDMIAICSHSLCRCASHLLCLSAHFLEAAGFIGKLIPKEGTCPACLGKLEWPTLMKEITLRLRGQEEVKRLLGRRRRTEQVGKRKISNHVSSEKGESEASMPSTDAKTMALPIRSHPSVGGSNFGKLGRSVGSAIRTNTDNGSVKAVTPEIEFYRRRKCNAKKNFSGLYSTPRINISDWDNAEIIE.

Residues alanine 13–glutamate 95 enclose the GIY-YIG domain. 2 disordered regions span residues threonine 34–serine 57 and valine 96–glycine 120. An SLX1-type zinc finger spans residues cysteine 225–cysteine 280. Residues arginine 310–serine 322 show a composition bias toward basic residues. The tract at residues arginine 310 to threonine 339 is disordered.

It belongs to the SLX1 family. Forms a heterodimer with SLX4. It depends on a divalent metal cation as a cofactor.

It is found in the nucleus. Functionally, catalytic subunit of the SLX1-SLX4 structure-specific endonuclease that resolves DNA secondary structures generated during DNA repair and recombination. Has endonuclease activity towards branched DNA substrates, introducing single-strand cuts in duplex DNA close to junctions with ss-DNA. The chain is Structure-specific endonuclease subunit SLX1 from Ajellomyces capsulatus (strain G186AR / H82 / ATCC MYA-2454 / RMSCC 2432) (Darling's disease fungus).